We begin with the raw amino-acid sequence, 322 residues long: uncharacterized protein (322 aa).

Residues 1–13 (MTNADEQNMGQQE) are compositionally biased toward polar residues. Disordered stretches follow at residues 1–94 (MTNA…EEYE) and 125–322 (RREM…TDEE). The span at 14–31 (GTDTATTAQDTNTQTVGT) shows a compositional bias: low complexity. Residues 32–50 (QSENTQNTQQASDAQTEQT) are compositionally biased toward polar residues. The segment covering 64–75 (EVDEDDVLDAQE) has biased composition (acidic residues). Basic and acidic residues-rich tracts occupy residues 141-227 (GGDR…RGGD), 235-269 (RPRE…RGGD), 277-295 (RPRE…RTDD), and 308-322 (ARAD…TDEE).

This is an uncharacterized protein from Deinococcus radiodurans (strain ATCC 13939 / DSM 20539 / JCM 16871 / CCUG 27074 / LMG 4051 / NBRC 15346 / NCIMB 9279 / VKM B-1422 / R1).